The sequence spans 289 residues: 4-hydroxy-tetrahydrodipicolinate synthase (289 aa).

A pyruvate-binding site is contributed by Thr-42. Residue Tyr-129 is the Proton donor/acceptor of the active site. The active-site Schiff-base intermediate with substrate is Lys-157. Residue Ile-198 participates in pyruvate binding.

It belongs to the DapA family. In terms of assembly, homotetramer; dimer of dimers.

The protein localises to the cytoplasm. The catalysed reaction is L-aspartate 4-semialdehyde + pyruvate = (2S,4S)-4-hydroxy-2,3,4,5-tetrahydrodipicolinate + H2O + H(+). It functions in the pathway amino-acid biosynthesis; L-lysine biosynthesis via DAP pathway; (S)-tetrahydrodipicolinate from L-aspartate: step 3/4. Catalyzes the condensation of (S)-aspartate-beta-semialdehyde [(S)-ASA] and pyruvate to 4-hydroxy-tetrahydrodipicolinate (HTPA). This chain is 4-hydroxy-tetrahydrodipicolinate synthase, found in Chlamydia caviae (strain ATCC VR-813 / DSM 19441 / 03DC25 / GPIC) (Chlamydophila caviae).